Here is a 102-residue protein sequence, read N- to C-terminus: uncharacterized protein (102 aa).

This is an uncharacterized protein from Ictaluridae (bullhead catfishes).